The chain runs to 590 residues: Cytosolic Fe-S cluster assembly factor nar1 (590 aa).

Position 20 (Cys-20) interacts with [4Fe-4S] cluster. Positions 25-50 are disordered; the sequence is ESLPQKQSNENPYEVTTEDKVQPENP. [4Fe-4S] cluster contacts are provided by Cys-60, Cys-63, Cys-66, Cys-204, and Cys-259. The tract at residues 423–446 is disordered; that stretch reads PGAKVATGQTAGGRRQPISRNGAS. [4Fe-4S] cluster contacts are provided by Cys-461 and Cys-465.

The protein belongs to the NARF family.

Component of the cytosolic Fe/S protein assembly machinery. Required for maturation of extramitochondrial Fe/S proteins. May play a role in the transfer of pre-assembled Fe/S clusters to target apoproteins. This is Cytosolic Fe-S cluster assembly factor nar1 (nar1) from Emericella nidulans (strain FGSC A4 / ATCC 38163 / CBS 112.46 / NRRL 194 / M139) (Aspergillus nidulans).